Here is a 302-residue protein sequence, read N- to C-terminus: Plant UBX domain-containing protein 3 (302 aa).

2 disordered regions span residues 1 to 64 (MSSK…PKHD) and 79 to 98 (VEGP…TGRL). The 65-residue stretch at 113-177 (PVIHNIIFWS…NLMRRDEKCP (65 aa)) folds into the SEP domain. Residues 224-301 (ETLPSTSIQL…GLASSVVIQK (78 aa)) form the UBX domain.

As to quaternary structure, interacts with CDC48A.

This is Plant UBX domain-containing protein 3 from Arabidopsis thaliana (Mouse-ear cress).